The sequence spans 135 residues: Flagellar assembly factor FliW 1 (135 aa).

It belongs to the FliW family. As to quaternary structure, interacts with translational regulator CsrA and flagellin(s).

It localises to the cytoplasm. Functionally, acts as an anti-CsrA protein, binds CsrA and prevents it from repressing translation of its target genes, one of which is flagellin. Binds to flagellin and participates in the assembly of the flagellum. This is Flagellar assembly factor FliW 1 from Helicobacter pylori (strain ATCC 700392 / 26695) (Campylobacter pylori).